A 144-amino-acid polypeptide reads, in one-letter code: Large ribosomal subunit protein uL15 (144 aa).

A compositionally biased stretch (basic and acidic residues) spans 1–18; sequence MRLNDLHPAEGSRPEGKR. Positions 1-58 are disordered; sequence MRLNDLHPAEGSRPEGKRVGRGIGSGLGKTGGRGHKGQKSRSGGSVKPGFEGGQMPLQ. Residues 21–31 are compositionally biased toward gly residues; it reads RGIGSGLGKTG.

The protein belongs to the universal ribosomal protein uL15 family. Part of the 50S ribosomal subunit.

Functionally, binds to the 23S rRNA. This Alcanivorax borkumensis (strain ATCC 700651 / DSM 11573 / NCIMB 13689 / SK2) protein is Large ribosomal subunit protein uL15.